Here is a 192-residue protein sequence, read N- to C-terminus: Na(+)-translocating ferredoxin:NAD(+) oxidoreductase complex subunit A (192 aa).

A run of 6 helical transmembrane segments spans residues 4–24 (IFIM…FLGI), 38–58 (VGMG…TYVV), 71–91 (LQTI…EMII), 101–121 (ALGV…VALI), 133–153 (IFNG…FAGI), and 169–189 (FPIA…FSGM).

This sequence belongs to the NqrDE/RnfAE family. As to quaternary structure, the complex is composed of six subunits: RnfA, RnfB, RnfC, RnfD, RnfE and RnfG.

The protein resides in the cell membrane. The catalysed reaction is 2 reduced [2Fe-2S]-[ferredoxin] + Na(+)(in) + NAD(+) + H(+) = 2 oxidized [2Fe-2S]-[ferredoxin] + Na(+)(out) + NADH. Functionally, part of a membrane-bound complex that couples electron transfer with translocation of ions across the membrane. Couples electron transfer from reduced ferredoxin to NAD(+) with electrogenic movement of Na(+) out of the cell. Involved in caffeate respiration. The protein is Na(+)-translocating ferredoxin:NAD(+) oxidoreductase complex subunit A of Acetobacterium woodii (strain ATCC 29683 / DSM 1030 / JCM 2381 / KCTC 1655 / WB1).